The primary structure comprises 857 residues: Glucans biosynthesis glucosyltransferase H (857 aa).

6 helical membrane-spanning segments follow: residues I142–L162, I196–M216, V515–L535, L572–W592, T606–F626, and F682–I702.

It belongs to the glycosyltransferase 2 family. OpgH subfamily.

It is found in the cell inner membrane. It participates in glycan metabolism; osmoregulated periplasmic glucan (OPG) biosynthesis. In terms of biological role, involved in the biosynthesis of osmoregulated periplasmic glucans (OPGs). In Pseudomonas putida (strain ATCC 700007 / DSM 6899 / JCM 31910 / BCRC 17059 / LMG 24140 / F1), this protein is Glucans biosynthesis glucosyltransferase H.